A 541-amino-acid polypeptide reads, in one-letter code: Chloride channel CLIC-like protein 1 (541 aa).

Positions 1-18 (MLCSLLLCGCLLLITGYA) are cleaved as a signal peptide. Over 19-184 (HDDDWIDPTD…EDYFGVDPYN (166 aa)) the chain is Lumenal. A helical transmembrane segment spans residues 185 to 205 (VFMVLLCLLCIVALVATELWT). The Cytoplasmic portion of the chain corresponds to 206-217 (YVRWHTQLKRVC). The helical transmembrane segment at 218-238 (IISFLVSLGWNWIYLYKVAFA) threads the bilayer. Topologically, residues 239–329 (QHQANVAKMA…GEFIKALMKE (91 aa)) are lumenal. Residues 330 to 350 (IPVLLQIPVLVILALAVLGFC) form a helical membrane-spanning segment. At 351 to 541 (YGAGQSVPML…GTDPVSSPCG (191 aa)) the chain is on the cytoplasmic side. Positions 362 to 381 (HFRGPEREPPRALEPDDRRR) are disordered. Residues 364-381 (RGPEREPPRALEPDDRRR) show a composition bias toward basic and acidic residues. A phosphoserine mark is found at Ser-434 and Ser-438. A Phosphothreonine modification is found at Thr-482. Ser-504 bears the Phosphoserine mark. A compositionally biased stretch (basic and acidic residues) spans 511-522 (QLKTDSECRPHS). The tract at residues 511-541 (QLKTDSECRPHSTEAAAAAARGTDPVSSPCG) is disordered.

Belongs to the chloride channel MCLC family. Homomultimers. Interacts with mitochondrial protein PIGBOS1 (via C-terminus); the interaction occurs at the mitochondria-associated endoplasmic reticulum (ER) membrane, a zone of contact between the ER and mitochondrial membranes, but does not appear to play a role in ER-mitochondria tethering and is not affected by ER stress. Interacts with CALR. Expressed in testis (spermatocytes), liver and lung (at protein level). Expressed in spleen, liver, testis, kidney, heart, brain and lung.

It localises to the endoplasmic reticulum membrane. The enzyme catalyses chloride(in) = chloride(out). It catalyses the reaction bromide(in) = bromide(out). It carries out the reaction nitrate(in) = nitrate(out). The catalysed reaction is fluoride(in) = fluoride(out). Anion-selective channel with Ca(2+)-dependent and voltage-independent gating. Permeable to small monovalent anions with selectivity for bromide &gt; chloride &gt; nitrate &gt; fluoride. Operates in the endoplasmic reticulum (ER) membrane where it mediates chloride efflux to compensate for the loss of positive charges from the ER lumen upon Ca(2+) release. Contributes to the maintenance of ER Ca(2+) pools and activation of unfolded protein response to prevent accumulation of misfolded proteins in the ER lumen. Particularly involved in ER homeostasis mechanisms underlying motor neurons and retinal photoreceptors survival. The chain is Chloride channel CLIC-like protein 1 from Rattus norvegicus (Rat).